The following is a 513-amino-acid chain: Probable helicase MJ1565 (513 aa).

ATP-binding positions include Arg-151, 160-165, and 467-468; these read GMGKSN and KV.

The protein belongs to the HerA family.

It catalyses the reaction Couples ATP hydrolysis with the unwinding of duplex DNA at the replication fork by translocating in the 5'-3' direction. This creates two antiparallel DNA single strands (ssDNA). The leading ssDNA polymer is the template for DNA polymerase III holoenzyme which synthesizes a continuous strand.. The catalysed reaction is ATP + H2O = ADP + phosphate + H(+). The enzyme catalyses Couples ATP hydrolysis with the unwinding of duplex DNA by translocating in the 3'-5' direction.. Functionally, a probably bidirectional DNA helicase. The sequence is that of Probable helicase MJ1565 from Methanocaldococcus jannaschii (strain ATCC 43067 / DSM 2661 / JAL-1 / JCM 10045 / NBRC 100440) (Methanococcus jannaschii).